Here is a 169-residue protein sequence, read N- to C-terminus: Centrin-1 (169 aa).

Positions Met1–Glu21 are essential for homooligomerization. A disordered region spans residues Met1–Glu25. EF-hand domains are found at residues Glu25–Glu60, Pro61–Glu96, Asp98–Asn133, and Leu134–Phe169. Ca(2+) is bound by residues Asp38, Asp40, Ser42, Cys44, Glu49, Asp74, Asp76, Thr78, Ser80, and Glu85.

Belongs to the centrin family. As to quaternary structure, monomer. Homooligomerizes in a Ca(2+)-dependent manner. Interaction via the C-terminus with other proteins disrupts and/or prevents homooligomerization. Interacts with SFI1.

The protein localises to the cytoplasm. The protein resides in the cytoskeleton. Its subcellular location is the microtubule organizing center. It is found in the centrosome. In terms of biological role, acts as a calcium sensor. Part of the centrosome outer core complex. The polypeptide is Centrin-1 (Toxoplasma gondii (strain ATCC 50611 / Me49)).